The chain runs to 344 residues: Trace amine-associated receptor 8c (344 aa).

Topologically, residues 1–31 (MTSNFSQPALQLCYENTNGSCIKTPYSPGPR) are extracellular. Asn4 and Asn18 each carry an N-linked (GlcNAc...) asparagine glycan. 2 cysteine pairs are disulfide-bonded: Cys21–Cys185 and Cys104–Cys189. The helical transmembrane segment at 32-52 (VILYMVYGFGAVLAVCGNLLV) threads the bilayer. At 53–67 (VISVLHFKQLHSPAN) the chain is on the cytoplasmic side. A helical membrane pass occupies residues 68 to 88 (FLIASLASADFLVGISVMPFS). Residues 89-111 (MVRSIESCWYFGDAFCSLHSCCD) lie on the Extracellular side of the membrane. A helical membrane pass occupies residues 112-132 (VAFCYSSALHLCFISVDRYIA). The Cytoplasmic segment spans residues 133–146 (VTDPLVYPTKFTVS). Residues 147–167 (VSGICISISWILPLVYSSAVF) traverse the membrane as a helical segment. At 168–195 (YTGISAKGIESLVSALNCVGGCQVVVNQ) the chain is on the extracellular side. Residues 196–216 (DWVLISFLLFFIPTVVMIILY) form a helical membrane-spanning segment. Residues 217-260 (SKIFLVAKQQAVKIETSVSGNRGESSSESHKARVAKRERKAAKT) are Cytoplasmic-facing. A helical membrane pass occupies residues 261–281 (LGVTVVAFMVSWLPYTIDALV). Position 282 (Asp282) is a topological domain, extracellular. A helical transmembrane segment spans residues 283-303 (AFMGFITPAYVYEICCWSAYY). Residues 304–344 (NSAMNPLIYAFFYPWFRKAIKLILSGKILKGHSSTTNLFSE) are Cytoplasmic-facing.

It belongs to the G-protein coupled receptor 1 family. As to expression, specifically expressed in neurons of the olfactory epithelium.

It is found in the cell membrane. Olfactory receptor specific for trace amines, such ascyclohexylamine (1-MPD). Trace amine compounds are enriched in animal body fluids and act on trace amine-associated receptors (TAARs) to elicit both intraspecific and interspecific innate behaviors. Ligand-binding causes a conformation change that triggers signaling via G(s)-class of G alpha proteins (GNAL or GNAS). The sequence is that of Trace amine-associated receptor 8c from Mus musculus (Mouse).